The following is a 149-amino-acid chain: 3-dehydroquinate dehydratase (149 aa).

Catalysis depends on tyrosine 23, which acts as the Proton acceptor. The substrate site is built by asparagine 74, histidine 80, and aspartate 87. Catalysis depends on histidine 100, which acts as the Proton donor. Substrate-binding positions include 101–102 (LS) and arginine 111.

The protein belongs to the type-II 3-dehydroquinase family. In terms of assembly, homododecamer.

The catalysed reaction is 3-dehydroquinate = 3-dehydroshikimate + H2O. The protein operates within metabolic intermediate biosynthesis; chorismate biosynthesis; chorismate from D-erythrose 4-phosphate and phosphoenolpyruvate: step 3/7. Its function is as follows. Catalyzes a trans-dehydration via an enolate intermediate. This Ruegeria pomeroyi (strain ATCC 700808 / DSM 15171 / DSS-3) (Silicibacter pomeroyi) protein is 3-dehydroquinate dehydratase.